A 24-amino-acid polypeptide reads, in one-letter code: Frenatin-4 (24 aa).

In terms of tissue distribution, expressed by the skin glands.

The protein resides in the secreted. Functionally, very weak antimicrobial peptide since it does not show activity below 100 ug/ml against Bacillus cereus, Escherichia coli, Leuconostoc mesenteroides, Micrococcus luteus, Pastewella haemolytica, Staphylococcus aureus, Streptococcus faecalis and Streptococcus uberis. The polypeptide is Frenatin-4 (Nyctimystes infrafrenatus (White-lipped tree frog)).